The chain runs to 131 residues: D-ribose pyranase (131 aa).

Residue His-20 is the Proton donor of the active site. Residues Asp-28, His-98, and 120 to 122 (YAN) each bind substrate.

This sequence belongs to the RbsD / FucU family. RbsD subfamily. Homodecamer.

It localises to the cytoplasm. It catalyses the reaction beta-D-ribopyranose = beta-D-ribofuranose. It participates in carbohydrate metabolism; D-ribose degradation; D-ribose 5-phosphate from beta-D-ribopyranose: step 1/2. Functionally, catalyzes the interconversion of beta-pyran and beta-furan forms of D-ribose. The sequence is that of D-ribose pyranase from Bacillus cereus (strain ATCC 14579 / DSM 31 / CCUG 7414 / JCM 2152 / NBRC 15305 / NCIMB 9373 / NCTC 2599 / NRRL B-3711).